The chain runs to 1088 residues: Protein unc-13 homolog D (1088 aa).

The disordered stretch occupies residues 26–46; the sequence is VRDLQDPPPQATPEVQVQSHH. In terms of domain architecture, C2 1 spans 92-239; sequence QPEEHQQMLQ…FKEARKDKGQ (148 aa). Ca(2+) is bound by residues D127 and D133. S150 carries the phosphoserine modification. Ca(2+) contacts are provided by D206 and D208. The segment at 240-543 is interaction with RAB27A; the sequence is DDFLGNVMLR…AKRVQDHTAA (304 aa). An MHD1 domain is found at 557–675; the sequence is FQLYVSLREF…RLALVYCSLI (119 aa). An MHD2 domain is found at 786-893; it reads EDAILPLMKF…ASSRELIQKY (108 aa). One can recognise a C2 2 domain in the interval 908–1033; the sequence is RLGAVTVKAS…PGLTGCVEPG (126 aa). Ca(2+) contacts are provided by L938, D939, D945, D1003, D1005, and D1011.

Belongs to the unc-13 family. Interacts with RAB27A and DOC2A. Interacts with RhoG; the interaction increases RhoG affinity to the membrane lipids, targets Unc13d to membrane lipids and facilitates cytotoxic granule (CG) docking to the plasma membrane. Ca(2+) is required as a cofactor. Expressed in lung bronchial epithelium goblet/mucous cells. Also expressed in spleen and testis. Expressed at very low levels in heart muscle, kidney, liver, brain and skeletal muscle.

The protein localises to the cytoplasm. The protein resides in the membrane. Its subcellular location is the late endosome. It is found in the recycling endosome. It localises to the lysosome. Its function is as follows. Plays a role in cytotoxic granule exocytosis in lymphocytes. Required for both granule maturation and granule docking and priming at the immunologic synapse. Regulates assembly of recycling and late endosomal structures, leading to the formation of an endosomal exocytic compartment that fuses with perforin-containing granules at the immunologic synapse and licences them for exocytosis. Regulates Ca(2+)-dependent secretory lysosome exocytosis in mast cells. The chain is Protein unc-13 homolog D (Unc13d) from Rattus norvegicus (Rat).